Consider the following 82-residue polypeptide: MGGISIWQLLIIAVIIVLLFGTKKLRGVGSDLGSAVKGFKKAISEDEPAKDAKKDADFVPQNLEKKEAETVEKQKQNDKEQA.

Residues 1–21 form a helical membrane-spanning segment; sequence MGGISIWQLLIIAVIIVLLFG. Residues 46–82 form a disordered region; the sequence is DEPAKDAKKDADFVPQNLEKKEAETVEKQKQNDKEQA.

It belongs to the TatA/E family. The Tat system comprises two distinct complexes: a TatABC complex, containing multiple copies of TatA, TatB and TatC subunits, and a separate TatA complex, containing only TatA subunits. Substrates initially bind to the TatABC complex, which probably triggers association of the separate TatA complex to form the active translocon.

It localises to the cell inner membrane. Part of the twin-arginine translocation (Tat) system that transports large folded proteins containing a characteristic twin-arginine motif in their signal peptide across membranes. TatA could form the protein-conducting channel of the Tat system. This chain is Sec-independent protein translocase protein TatA, found in Aliivibrio fischeri (strain MJ11) (Vibrio fischeri).